The following is a 192-amino-acid chain: Imidazoleglycerol-phosphate dehydratase (192 aa).

The protein belongs to the imidazoleglycerol-phosphate dehydratase family.

It is found in the cytoplasm. It catalyses the reaction D-erythro-1-(imidazol-4-yl)glycerol 3-phosphate = 3-(imidazol-4-yl)-2-oxopropyl phosphate + H2O. It participates in amino-acid biosynthesis; L-histidine biosynthesis; L-histidine from 5-phospho-alpha-D-ribose 1-diphosphate: step 6/9. The polypeptide is Imidazoleglycerol-phosphate dehydratase (Staphylococcus epidermidis (strain ATCC 35984 / DSM 28319 / BCRC 17069 / CCUG 31568 / BM 3577 / RP62A)).